Consider the following 593-residue polypeptide: V-type sodium ATPase catalytic subunit A (593 aa).

232–239 (GPFGAGKT) is a binding site for ATP.

Belongs to the ATPase alpha/beta chains family.

It carries out the reaction 4 Na(+)(in) + ATP + H2O = 4 Na(+)(out) + ADP + phosphate + H(+). In terms of biological role, involved in ATP-driven sodium extrusion. This Enterococcus hirae (strain ATCC 9790 / DSM 20160 / JCM 8729 / LMG 6399 / NBRC 3181 / NCIMB 6459 / NCDO 1258 / NCTC 12367 / WDCM 00089 / R) protein is V-type sodium ATPase catalytic subunit A (ntpA).